A 339-amino-acid polypeptide reads, in one-letter code: Biotin synthase (339 aa).

Residues 55 to 282 (NAVQLSTLLS…KAVVRLSAGR (228 aa)) form the Radical SAM core domain. [4Fe-4S] cluster is bound by residues cysteine 70, cysteine 74, and cysteine 77. Residues cysteine 114, cysteine 145, cysteine 205, and arginine 277 each coordinate [2Fe-2S] cluster.

It belongs to the radical SAM superfamily. Biotin synthase family. Homodimer. The cofactor is [4Fe-4S] cluster. Requires [2Fe-2S] cluster as cofactor.

The catalysed reaction is (4R,5S)-dethiobiotin + (sulfur carrier)-SH + 2 reduced [2Fe-2S]-[ferredoxin] + 2 S-adenosyl-L-methionine = (sulfur carrier)-H + biotin + 2 5'-deoxyadenosine + 2 L-methionine + 2 oxidized [2Fe-2S]-[ferredoxin]. Its pathway is cofactor biosynthesis; biotin biosynthesis; biotin from 7,8-diaminononanoate: step 2/2. Catalyzes the conversion of dethiobiotin (DTB) to biotin by the insertion of a sulfur atom into dethiobiotin via a radical-based mechanism. The polypeptide is Biotin synthase (Burkholderia orbicola (strain MC0-3)).